The chain runs to 132 residues: Small ribosomal subunit protein uS8 (132 aa).

It belongs to the universal ribosomal protein uS8 family. Part of the 30S ribosomal subunit. Contacts proteins S5 and S12.

In terms of biological role, one of the primary rRNA binding proteins, it binds directly to 16S rRNA central domain where it helps coordinate assembly of the platform of the 30S subunit. The polypeptide is Small ribosomal subunit protein uS8 (Sinorhizobium fredii (strain NBRC 101917 / NGR234)).